Consider the following 263-residue polypeptide: Imidazole glycerol phosphate synthase subunit HisF (263 aa).

Catalysis depends on residues Asp22 and Asp141.

It belongs to the HisA/HisF family. As to quaternary structure, heterodimer of HisH and HisF.

Its subcellular location is the cytoplasm. The catalysed reaction is 5-[(5-phospho-1-deoxy-D-ribulos-1-ylimino)methylamino]-1-(5-phospho-beta-D-ribosyl)imidazole-4-carboxamide + L-glutamine = D-erythro-1-(imidazol-4-yl)glycerol 3-phosphate + 5-amino-1-(5-phospho-beta-D-ribosyl)imidazole-4-carboxamide + L-glutamate + H(+). It functions in the pathway amino-acid biosynthesis; L-histidine biosynthesis; L-histidine from 5-phospho-alpha-D-ribose 1-diphosphate: step 5/9. IGPS catalyzes the conversion of PRFAR and glutamine to IGP, AICAR and glutamate. The HisF subunit catalyzes the cyclization activity that produces IGP and AICAR from PRFAR using the ammonia provided by the HisH subunit. The chain is Imidazole glycerol phosphate synthase subunit HisF from Clavibacter michiganensis subsp. michiganensis (strain NCPPB 382).